The primary structure comprises 470 residues: Dendritic cell-specific transmembrane protein (470 aa).

The Cytoplasmic portion of the chain corresponds to 1–33 (MRLWTLGTSIFLRLWGTYVFPRSPSWLDFIQHL). A helical membrane pass occupies residues 34–54 (GVCCFVAFLSVSLFSAAFYWI). Residue leucine 55 is a topological domain, extracellular. A helical transmembrane segment spans residues 56–76 (PPVALLSSVWMITCVFLCCSK). Residues 77–97 (RARCFILLAVLSCGLREGRNA) lie on the Cytoplasmic side of the membrane. Residues 98–118 (LIAAGTGVVIFGHVENIFYNF) form a helical membrane-spanning segment. At 119 to 209 (RGLLDSMTCN…MVVTTELLTS (91 aa)) the chain is on the extracellular side. The helical transmembrane segment at 210–230 (VGQKLLALAGLLLILVSTGLF) threads the bilayer. Residues 231-292 (LKRFLGPCGW…LQLTPKEKKT (62 aa)) lie on the Cytoplasmic side of the membrane. The chain crosses the membrane as a helical span at residues 293 to 313 (LGLFFLPVLTYLYMWVLFAAV). Residues 314 to 376 (DYLLYRLISS…PKPRLSVSET (63 aa)) lie on the Extracellular side of the membrane. The helical transmembrane segment at 377 to 397 (WVPLSIILLTLIILGLLSSML) threads the bilayer. The Cytoplasmic portion of the chain corresponds to 398 to 470 (MQLKILVSVS…QTIPANEDDL (73 aa)).

As to quaternary structure, interacts with CREB3. Monomer. Homodimer. Isoform 1 interacts (via the C-terminus cytoplasmic tail) with OS9 isoform 1 (via the C-terminus tail); the interaction induces DCSTAMP redistribution to the endoplasmic reticulum-Golgi intermediate compartment. Isoform 1 interacts (via the C-terminus cytoplasmic tail) with OS9 isoform 2 (via the C-terminus tail). Glycosylated. In terms of tissue distribution, expressed in macrophages and bone marrow dendritic cells (BM-DC). Weakly expressed in the spleen and lymph node. Highly expressed in multi-nuclear osteoclasts compared to mono-nuclear macrophages. Expressed in foreign body giant cells (FBGCs). Isoform 1 and isoform 2 are expressed in osteoclasts.

Its subcellular location is the cell membrane. The protein localises to the endoplasmic reticulum membrane. The protein resides in the endoplasmic reticulum-Golgi intermediate compartment membrane. It localises to the endosome. Probable cell surface receptor that plays several roles in cellular fusion, cell differentiation, bone and immune homeostasis. Plays a role in TNFSF11-mediated osteoclastogenesis. Cooperates with OCSTAMP in modulating cell-cell fusion in both osteoclasts and foreign body giant cells (FBGCs). Participates in osteoclast bone resorption. Involved in inducing the expression of tartrate-resistant acid phosphatase in osteoclast precursors. Plays a role in haematopoietic stem cell differentiation of bone marrow cells toward the myeloid lineage. Inhibits the development of neutrophilic granulocytes. Plays also a role in the regulation of dendritic cell (DC) antigen presentation activity by controlling phagocytic activity. Involved in the maintenance of immune self-tolerance and avoidance of autoimmune reactions. This Mus musculus (Mouse) protein is Dendritic cell-specific transmembrane protein (Dcstamp).